The chain runs to 382 residues: Pyrimidine monooxygenase RutA (382 aa).

Residues 68 to 69 (IK), N134, E143, 159 to 160 (RY), and S209 contribute to the FMN site.

The protein belongs to the NtaA/SnaA/DszA monooxygenase family. RutA subfamily.

The catalysed reaction is uracil + FMNH2 + NADH + O2 = (Z)-3-ureidoacrylate + FMN + NAD(+) + H2O + H(+). It carries out the reaction thymine + FMNH2 + NADH + O2 = (Z)-2-methylureidoacrylate + FMN + NAD(+) + H2O + H(+). In terms of biological role, catalyzes the pyrimidine ring opening between N-3 and C-4 by an unusual flavin hydroperoxide-catalyzed mechanism, adding oxygen atoms in the process to yield ureidoacrylate peracid, that immediately reacts with FMN forming ureidoacrylate and FMN-N(5)-oxide. The FMN-N(5)-oxide reacts spontaneously with NADH to produce FMN. Requires the flavin reductase RutF to regenerate FMN in vivo. The chain is Pyrimidine monooxygenase RutA from Escherichia coli O55:H7 (strain CB9615 / EPEC).